The primary structure comprises 274 residues: Formamidopyrimidine-DNA glycosylase (274 aa).

P2 functions as the Schiff-base intermediate with DNA in the catalytic mechanism. Residue E3 is the Proton donor of the active site. K58 serves as the catalytic Proton donor; for beta-elimination activity. 3 residues coordinate DNA: H91, R110, and K152. The FPG-type zinc finger occupies 237–271 (KVYGRKNLPCLVCENKIETVVIAGRHSAFCPHCQP). The active-site Proton donor; for delta-elimination activity is R261.

It belongs to the FPG family. In terms of assembly, monomer. Zn(2+) serves as cofactor.

The catalysed reaction is Hydrolysis of DNA containing ring-opened 7-methylguanine residues, releasing 2,6-diamino-4-hydroxy-5-(N-methyl)formamidopyrimidine.. It catalyses the reaction 2'-deoxyribonucleotide-(2'-deoxyribose 5'-phosphate)-2'-deoxyribonucleotide-DNA = a 3'-end 2'-deoxyribonucleotide-(2,3-dehydro-2,3-deoxyribose 5'-phosphate)-DNA + a 5'-end 5'-phospho-2'-deoxyribonucleoside-DNA + H(+). Functionally, involved in base excision repair of DNA damaged by oxidation or by mutagenic agents. Acts as a DNA glycosylase that recognizes and removes damaged bases. Has a preference for oxidized purines, such as 7,8-dihydro-8-oxoguanine (8-oxoG). Has AP (apurinic/apyrimidinic) lyase activity and introduces nicks in the DNA strand. Cleaves the DNA backbone by beta-delta elimination to generate a single-strand break at the site of the removed base with both 3'- and 5'-phosphates. The protein is Formamidopyrimidine-DNA glycosylase of Legionella pneumophila subsp. pneumophila (strain Philadelphia 1 / ATCC 33152 / DSM 7513).